Here is a 223-residue protein sequence, read N- to C-terminus: Guanylate kinase (223 aa).

A disordered region spans residues 1 to 22 (MTADGGPDVRHGTRPEPSGDGR). Positions 7–19 (PDVRHGTRPEPSG) are enriched in basic and acidic residues. The region spanning 21 to 201 (GRVVVLSGPS…ACAELVSLLV (181 aa)) is the Guanylate kinase-like domain. 28 to 35 (GPSAVGKS) serves as a coordination point for ATP. The segment at 204–223 (APDRHDTSGRTGRQTTSHPD) is disordered. Over residues 212-223 (GRTGRQTTSHPD) the composition is skewed to polar residues.

It belongs to the guanylate kinase family.

Its subcellular location is the cytoplasm. It carries out the reaction GMP + ATP = GDP + ADP. In terms of biological role, essential for recycling GMP and indirectly, cGMP. In Mycolicibacterium paratuberculosis (strain ATCC BAA-968 / K-10) (Mycobacterium paratuberculosis), this protein is Guanylate kinase.